The following is a 450-amino-acid chain: Runt-related transcription factor 1 (450 aa).

Positions 1 to 25 (MRIPVDASTSRRFTPPSTALSPGKM) are disordered. A compositionally biased stretch (polar residues) spans 7 to 20 (ASTSRRFTPPSTAL). T14 carries the phosphothreonine modification. Phosphoserine is present on S21. 2 positions are modified to N6-acetyllysine: K24 and K43. The 129-residue stretch at 50–178 (SMVEVLADHP…TVDGPREPRR (129 aa)) folds into the Runt domain. Residues 80 to 84 (RCNKT) form an interaction with DNA region. Residues N112, E116, R139, and V170 each contribute to the chloride site. Interaction with DNA stretches follow at residues 135-143 (RFVGRSGRG) and 168-177 (ITVDGPREPR). 2 disordered regions span residues 170-195 (VDGP…LSFS) and 209-252 (MRVS…SPPW). 2 positions are modified to phosphoserine: S193 and S212. Positions 222-247 (PRASLNHSTAFNPQPQSQMQDARQIQ) are enriched in polar residues. A Phosphoserine; by HIPK2 modification is found at S249. A phosphoserine mark is found at S266 and S267. T272 carries the post-translational modification Phosphothreonine; by HIPK2. At S275 the chain carries Phosphoserine; by HIPK2. Residues 290 to 369 (SSRLSTAPDL…SQAQAGPFQT (80 aa)) form an interaction with KAT6A region. T295 is subject to Phosphothreonine. The interval 306 to 398 (RQFPTLPSIS…MVGGERSPPR (93 aa)) is interaction with KAT6B. The interval 360-400 (SQAQAGPFQTGSPSYHLYYGTSAGSYQFSMVGGERSPPRIL) is interaction with FOXP3. Residues 410 to 450 (AALLNPSLPSQSDVVETEGSHSNSPTNMPPARLEEAVWRPY) form a disordered region. Residues 416–435 (SLPSQSDVVETEGSHSNSPT) are compositionally biased toward polar residues. At S433 the chain carries Phosphoserine. The segment covering 441–450 (RLEEAVWRPY) has biased composition (basic and acidic residues).

As to quaternary structure, heterodimer with CBFB. RUNX1 binds DNA as a monomer and through the Runt domain. DNA-binding is increased by heterodimerization. Interacts with TLE1 and ALYREF/THOC4. Interacts with ELF1, ELF2 and SPI1. Interacts via its Runt domain with the ELF4 N-terminal region. Interaction with ELF2 isoform 2 (NERF-1a) may act to repress RUNX1-mediated transactivation. Interacts with KAT6A and KAT6B. Interacts with SUV39H1, leading to abrogation of transactivating and DNA-binding properties of RUNX1. Interacts with YAP1 and HIPK2. Interaction with CDK6 prevents myeloid differentiation, reducing its transcription transactivation activity. Found in a complex with PRMT5, RUNX1 and CBFB. Interacts with FOXP3. Interacts with TBX21. Interacts with DPF2. Phosphorylated in its C-terminus upon IL-6 treatment. Phosphorylation enhances interaction with KAT6A. In terms of processing, methylated. Post-translationally, phosphorylated in Ser-249 Thr-272 and Ser-275 by HIPK2 when associated with CBFB and DNA. This phosphorylation promotes subsequent EP300 phosphorylation. As to expression, expressed in skeletal muscle.

The protein localises to the nucleus. CBF binds to the core site, 5'-PYGPYGGT-3', of a number of enhancers and promoters, including murine leukemia virus, polyomavirus enhancer, T-cell receptor enhancers, LCK, IL-3 and GM-CSF promoters. The alpha subunit binds DNA and appears to have a role in the development of normal hematopoiesis. Isoform AML-1L interferes with the transactivation activity of RUNX1. Acts synergistically with ELF4 to transactivate the IL-3 promoter and with ELF2 to transactivate the BLK promoter. Inhibits KAT6B-dependent transcriptional activation. Controls the anergy and suppressive function of regulatory T-cells (Treg) by associating with FOXP3. Activates the expression of IL2 and IFNG and down-regulates the expression of TNFRSF18, IL2RA and CTLA4, in conventional T-cells. Positively regulates the expression of RORC in T-helper 17 cells. This Rattus norvegicus (Rat) protein is Runt-related transcription factor 1 (Runx1).